Consider the following 316-residue polypeptide: Transcription factor MafB (316 aa).

Disordered regions lie at residues 40–78 (PDRA…SPTE) and 116–204 (HQMP…EDRF). The span at 55 to 77 (SVSSTPISTPCSSVPSSPSFSPT) shows a compositional bias: low complexity. Composition is skewed to basic residues over residues 130–144 (GHHH…HQNH) and 160–172 (QHPH…HHHQ). Over residues 177-198 (PSGSSSSSQQLQNSHQQHQNSS) the composition is skewed to low complexity. Residues 231 to 256 (RLKQKRRTLKNRGYAQSCRFKRVQQK) form a basic motif region. Residues 231–294 (RLKQKRRTLK…DAYKIKCEKL (64 aa)) form the bZIP domain. A leucine-zipper region spans residues 259–280 (LENEKTQLIQQVEQLKLEVSRL).

It belongs to the bZIP family. Maf subfamily. As to quaternary structure, homodimer or heterodimer with other bHLH-Zip transcription factors. Binds DNA as a homodimer or a heterodimer.

It is found in the nucleus. Functionally, acts as a transcriptional activator or repressor. Implicated in the regulation of cell-type specific gene expression and play a role in inductive events during lens development. This chain is Transcription factor MafB (mafb), found in Xenopus tropicalis (Western clawed frog).